The primary structure comprises 205 residues: Ribosome maturation factor RimP (205 aa).

Belongs to the RimP family.

It localises to the cytoplasm. In terms of biological role, required for maturation of 30S ribosomal subunits. In Sinorhizobium fredii (strain NBRC 101917 / NGR234), this protein is Ribosome maturation factor RimP.